Here is a 410-residue protein sequence, read N- to C-terminus: Multifunctional CCA protein (410 aa).

Positions 8 and 11 each coordinate ATP. Positions 8 and 11 each coordinate CTP. Mg(2+) is bound by residues D21 and D23. R91, R137, and R140 together coordinate ATP. The CTP site is built by R91, R137, and R140. The region spanning 225 to 326 is the HD domain; it reads SGIHTLMTLQ…LNVLKKTDAF (102 aa).

Belongs to the tRNA nucleotidyltransferase/poly(A) polymerase family. Bacterial CCA-adding enzyme type 1 subfamily. Monomer. Can also form homodimers and oligomers. Mg(2+) is required as a cofactor. Requires Ni(2+) as cofactor.

It carries out the reaction a tRNA precursor + 2 CTP + ATP = a tRNA with a 3' CCA end + 3 diphosphate. The catalysed reaction is a tRNA with a 3' CCA end + 2 CTP + ATP = a tRNA with a 3' CCACCA end + 3 diphosphate. Functionally, catalyzes the addition and repair of the essential 3'-terminal CCA sequence in tRNAs without using a nucleic acid template. Adds these three nucleotides in the order of C, C, and A to the tRNA nucleotide-73, using CTP and ATP as substrates and producing inorganic pyrophosphate. tRNA 3'-terminal CCA addition is required both for tRNA processing and repair. Also involved in tRNA surveillance by mediating tandem CCA addition to generate a CCACCA at the 3' terminus of unstable tRNAs. While stable tRNAs receive only 3'-terminal CCA, unstable tRNAs are marked with CCACCA and rapidly degraded. In Neisseria gonorrhoeae (strain NCCP11945), this protein is Multifunctional CCA protein.